The primary structure comprises 488 residues: Katanin p60 ATPase-containing subunit A-like 1 (488 aa).

The tract at residues 84–184 (FPNPVPEEGP…EQKKFDGTGY (101 aa)) is disordered. Residues 144–167 (KPDRPNTRDGRGNKAKEEKSKRNA) show a composition bias toward basic and acidic residues. ATP is bound at residue 246 to 253 (GPPGTGKT).

It belongs to the AAA ATPase family. Katanin p60 subunit A1 subfamily. A-like 1 sub-subfamily.

Its subcellular location is the cytoplasm. The protein resides in the cytoskeleton. It localises to the spindle pole. It is found in the spindle. It catalyses the reaction n ATP + n H2O + a microtubule = n ADP + n phosphate + (n+1) alpha/beta tubulin heterodimers.. Its function is as follows. Regulates microtubule dynamics in Sertoli cells, a process that is essential for spermiogenesis and male fertility. Severs microtubules in an ATP-dependent manner, promoting rapid reorganization of cellular microtubule arrays. In Danio rerio (Zebrafish), this protein is Katanin p60 ATPase-containing subunit A-like 1 (katnal1).